Consider the following 562-residue polypeptide: Potassium-transporting ATPase potassium-binding subunit (562 aa).

Transmembrane regions (helical) follow at residues 5–25, 63–83, 132–152, 175–195, 250–270, 279–299, 327–347, 356–376, 379–399, 416–436, 483–503, and 526–546; these read AFLL…PLGS, AAAI…LLMA, GLTV…FALI, LYVL…QGVL, LSNI…CFAF, QGHA…AVVM, FGVL…TGAV, ALGG…FGGV, GLYG…LMIG, MTAL…ALAL, VLLA…VLAI, and LFIG…FIPA.

This sequence belongs to the KdpA family. In terms of assembly, the system is composed of three essential subunits: KdpA, KdpB and KdpC.

Its subcellular location is the cell inner membrane. Part of the high-affinity ATP-driven potassium transport (or Kdp) system, which catalyzes the hydrolysis of ATP coupled with the electrogenic transport of potassium into the cytoplasm. This subunit binds the periplasmic potassium ions and delivers the ions to the membrane domain of KdpB through an intramembrane tunnel. The polypeptide is Potassium-transporting ATPase potassium-binding subunit (Pectobacterium carotovorum subsp. carotovorum (strain PC1)).